We begin with the raw amino-acid sequence, 449 residues long: Elongation factor 1-alpha 1 (449 aa).

Residues 5-230 (KFHINIVVIG…DQINEPKRPS (226 aa)) form the tr-type G domain. The interval 14 to 21 (GHVDSGKS) is G1. 14 to 21 (GHVDSGKS) serves as a coordination point for GTP. Position 55 is an N6,N6-dimethyllysine (K55). The G2 stretch occupies residues 70 to 74 (GITID). K79 is subject to N6,N6,N6-trimethyllysine. The interval 91–94 (DAPG) is G3. GTP-binding positions include 91-95 (DAPGH) and 153-156 (NKMD). The segment at 153 to 156 (NKMD) is G4. K187 is modified (N6,N6,N6-trimethyllysine). The tract at residues 194 to 196 (SGF) is G5. At K261 the chain carries N6-methyllysine. An N6,N6,N6-trimethyllysine mark is found at K306 and K396. Residues K438 and K441 each participate in a glycyl lysine isopeptide (Lys-Gly) (interchain with G-Cter in ubiquitin) cross-link.

This sequence belongs to the TRAFAC class translation factor GTPase superfamily. Classic translation factor GTPase family. EF-Tu/EF-1A subfamily.

The protein resides in the cytoplasm. Functionally, this protein promotes the GTP-dependent binding of aminoacyl-tRNA to the A-site of ribosomes during protein biosynthesis. This Arabidopsis thaliana (Mouse-ear cress) protein is Elongation factor 1-alpha 1 (A1).